A 501-amino-acid chain; its full sequence is ADP,ATP carrier protein 3 (501 aa).

Helical transmembrane passes span 23–43 (LKLFIPMALMMLCILFNFGAL), 59–79 (IISFLKLWLVLPSCVIFTVLY), 90–110 (YIFYSIVGTFLLFFLLFAYII), 146–166 (YALMYIFSELWSAVVINLMFW), 183–203 (PVLGMIGNIGLIIAGSVLVFF), 227–247 (IILQPIISIIVTAGIIAMFLF), 293–313 (IALLIICYGLLINIVEGPWKA), 326–346 (VNFMGMFNIWMGISCVTFMII), 361–381 (LLTPIMLSITGFIFFIFIIFI), 383–403 (EIGTCFGDFNLLYVAIIVGAI), 446–466 (FGKSLGAFIQSLIFIIIPTAT), and 470–490 (IIIYLLVIFIVMMNLWIWNII).

Belongs to the ADP/ATP translocase tlc family.

It is found in the cell membrane. Provides the rickettsial cell with host ATP in exchange for rickettsial ADP. This is an obligate exchange system. This energy acquiring activity is an important component of rickettsial parasitism. This Rickettsia typhi (strain ATCC VR-144 / Wilmington) protein is ADP,ATP carrier protein 3 (tlcC).